The chain runs to 192 residues: Peptidyl-tRNA hydrolase (192 aa).

Tyrosine 18 contacts tRNA. Histidine 23 serves as the catalytic Proton acceptor. TRNA-binding residues include phenylalanine 69, asparagine 71, and asparagine 117.

This sequence belongs to the PTH family. Monomer.

It localises to the cytoplasm. The catalysed reaction is an N-acyl-L-alpha-aminoacyl-tRNA + H2O = an N-acyl-L-amino acid + a tRNA + H(+). Functionally, hydrolyzes ribosome-free peptidyl-tRNAs (with 1 or more amino acids incorporated), which drop off the ribosome during protein synthesis, or as a result of ribosome stalling. Catalyzes the release of premature peptidyl moieties from peptidyl-tRNA molecules trapped in stalled 50S ribosomal subunits, and thus maintains levels of free tRNAs and 50S ribosomes. The protein is Peptidyl-tRNA hydrolase of Neisseria meningitidis serogroup C (strain 053442).